The primary structure comprises 137 residues: Large ribosomal subunit protein uL16 (137 aa).

The protein belongs to the universal ribosomal protein uL16 family. Part of the 50S ribosomal subunit.

In terms of biological role, binds 23S rRNA and is also seen to make contacts with the A and possibly P site tRNAs. The protein is Large ribosomal subunit protein uL16 of Xanthomonas campestris pv. campestris (strain 8004).